Here is a 398-residue protein sequence, read N- to C-terminus: MKLIKNLMPLKSAEKIVFEKLSEYLDENKKVKEVDIVEALNRISAEDIKAPIDLPYFNKAAMDGYAVIAEDTFGASETNPIILNLADGDEITYGEAKKIFTGDKLPKNANAVVMKEFCNEVDDFVEVYKTVHPNENVSRIGEDVKKGDVVLKKGEIINPYHLNMLASLGIKKIKVYDLSFGIISTGDELINLDEIRDIEEDISKLDGKIINSNSYMLYGLVKNLGFNAKIYDIVKDDKEKLKKAIKTALSENDALLITGGTSVSERDITVETVRELGDVIVHGVNIRPGKPFGFGIINDKPVFMLSGYPVASAVQFELFIQRFFIERKKVTLPLKRNMASELGRVDFVRVKVDIEVEPIRITGSGVISSLIKSDGYILIPENVEGYEKGELVDVYLLK.

Belongs to the MoeA family.

It functions in the pathway cofactor biosynthesis; molybdopterin biosynthesis. The polypeptide is Putative molybdopterin biosynthesis protein MJ0666 (Methanocaldococcus jannaschii (strain ATCC 43067 / DSM 2661 / JAL-1 / JCM 10045 / NBRC 100440) (Methanococcus jannaschii)).